Here is a 304-residue protein sequence, read N- to C-terminus: Homoserine kinase (304 aa).

An ATP-binding site is contributed by 90–100 (PLARGLGSSAS).

It belongs to the GHMP kinase family. Homoserine kinase subfamily.

The protein resides in the cytoplasm. The enzyme catalyses L-homoserine + ATP = O-phospho-L-homoserine + ADP + H(+). Its pathway is amino-acid biosynthesis; L-threonine biosynthesis; L-threonine from L-aspartate: step 4/5. In terms of biological role, catalyzes the ATP-dependent phosphorylation of L-homoserine to L-homoserine phosphate. The protein is Homoserine kinase of Staphylococcus aureus (strain MRSA252).